We begin with the raw amino-acid sequence, 214 residues long: Pyridoxine/pyridoxamine 5'-phosphate oxidase (214 aa).

Substrate-binding positions include 9–12 (RREY) and lysine 67. FMN-binding positions include 62-67 (RTVLLK), 77-78 (YS), arginine 83, lysine 84, and glutamine 106. Residues tyrosine 124, arginine 128, and serine 132 each contribute to the substrate site. FMN is bound by residues 141–142 (QS) and tryptophan 186. 192–194 (RLH) is a substrate binding site. Residue arginine 196 coordinates FMN.

Belongs to the pyridoxamine 5'-phosphate oxidase family. In terms of assembly, homodimer. FMN is required as a cofactor.

It catalyses the reaction pyridoxamine 5'-phosphate + O2 + H2O = pyridoxal 5'-phosphate + H2O2 + NH4(+). It carries out the reaction pyridoxine 5'-phosphate + O2 = pyridoxal 5'-phosphate + H2O2. It participates in cofactor metabolism; pyridoxal 5'-phosphate salvage; pyridoxal 5'-phosphate from pyridoxamine 5'-phosphate: step 1/1. Its pathway is cofactor metabolism; pyridoxal 5'-phosphate salvage; pyridoxal 5'-phosphate from pyridoxine 5'-phosphate: step 1/1. In terms of biological role, catalyzes the oxidation of either pyridoxine 5'-phosphate (PNP) or pyridoxamine 5'-phosphate (PMP) into pyridoxal 5'-phosphate (PLP). The sequence is that of Pyridoxine/pyridoxamine 5'-phosphate oxidase from Porphyromonas gingivalis (strain ATCC 33277 / DSM 20709 / CIP 103683 / JCM 12257 / NCTC 11834 / 2561).